The primary structure comprises 546 residues: Chaperonin GroEL (546 aa).

ATP contacts are provided by residues 30–33 (TLGP), Lys-51, 87–91 (DGTTT), Gly-415, 479–481 (NAA), and Asp-495.

The protein belongs to the chaperonin (HSP60) family. In terms of assembly, forms a cylinder of 14 subunits composed of two heptameric rings stacked back-to-back. Interacts with the co-chaperonin GroES.

The protein localises to the cytoplasm. The enzyme catalyses ATP + H2O + a folded polypeptide = ADP + phosphate + an unfolded polypeptide.. Its function is as follows. Together with its co-chaperonin GroES, plays an essential role in assisting protein folding. The GroEL-GroES system forms a nano-cage that allows encapsulation of the non-native substrate proteins and provides a physical environment optimized to promote and accelerate protein folding. This chain is Chaperonin GroEL, found in Pseudomonas putida (strain ATCC 700007 / DSM 6899 / JCM 31910 / BCRC 17059 / LMG 24140 / F1).